The primary structure comprises 180 residues: ATP-dependent protease subunit HslV (180 aa).

Thr5 is a catalytic residue. 3 residues coordinate Na(+): Gly161, Cys164, and Thr167.

The protein belongs to the peptidase T1B family. HslV subfamily. A double ring-shaped homohexamer of HslV is capped on each side by a ring-shaped HslU homohexamer. The assembly of the HslU/HslV complex is dependent on binding of ATP.

Its subcellular location is the cytoplasm. The enzyme catalyses ATP-dependent cleavage of peptide bonds with broad specificity.. Allosterically activated by HslU binding. In terms of biological role, protease subunit of a proteasome-like degradation complex believed to be a general protein degrading machinery. This chain is ATP-dependent protease subunit HslV, found in Campylobacter jejuni subsp. jejuni serotype O:2 (strain ATCC 700819 / NCTC 11168).